A 372-amino-acid chain; its full sequence is Cyclin-dependent kinase 9 (372 aa).

In terms of domain architecture, Protein kinase spans 19–315 (YEKLAKIGQG…SDDALNHDFF (297 aa)). Residue 25 to 33 (IGQGTFGEV) coordinates ATP. K44 carries the N6-acetyllysine; by EP300/CBP, PCAF/KAT2B and GCN5/KAT2A modification. ATP-binding positions include K48 and 104–106 (DFC). K48 carries the N6-acetyllysine; by PCAF/KAT2B and GCN5/KAT2A modification. The Proton acceptor role is filled by D149. The T-loop stretch occupies residues 166–191 (ADFGLARAFSLAKNSQPNRYTNRVVT). ATP is bound at residue D167. S175 carries the phosphoserine modification. The residue at position 186 (T186) is a Phosphothreonine; by CaMK1D. A disordered region spans residues 343-372 (RRKGSQITQQSTNQSRNPATTNQTEFERVF). S347 bears the Phosphoserine; by CDK9 and PKA mark. Positions 347–366 (SQITQQSTNQSRNPATTNQT) are enriched in polar residues. T350 is modified (phosphothreonine; by CDK9). Phosphoserine; by CDK9 is present on S353. T354 is subject to Phosphothreonine; by CDK9. At S357 the chain carries Phosphoserine; by CDK9. Phosphothreonine; by CDK9 is present on residues T362 and T363.

It belongs to the protein kinase superfamily. CMGC Ser/Thr protein kinase family. CDC2/CDKX subfamily. As to quaternary structure, component of the super elongation complex (SEC), at least composed of EAF1, EAF2, CDK9, MLLT3/AF9, AFF (AFF1 or AFF4), the P-TEFb complex and ELL (ELL, ELL2 or ELL3). Associates with CCNT1/cyclin-T1, CCNT2/cyclin-T2 (isoform A and isoform B) or CCNK/cyclin-K to form active P-TEFb. P-TEFb forms a complex with AFF4/AF5Q31 and is part of the super elongation complex (SEC). Component of a complex which is composed of at least 5 members: HTATSF1/Tat-SF1, P-TEFb complex, RNA pol II, SUPT5H, and NCL/nucleolin. Associates with UBR5 and forms a transcription regulatory complex composed of CDK9, RNAP II, UBR5 and TFIIS/TCEA1 that can stimulate target gene transcription (e.g. gamma fibrinogen/FGG) by recruiting their promoters. Component of the 7SK snRNP inactive complex which is composed of at least 8 members: P-TEFb (composed of CDK9 and CCNT1/cyclin-T1), HEXIM1, HEXIM2, LARP7, BCDIN3, SART3 proteins and 7SK and U6 snRNAs. This inactive 7SK snRNP complex can also interact with NCOR1 and HDAC3, probably to regulate CDK9 acetylation. Release of P-TEFb from P-TEFb/7SK snRNP complex requires both PP2B to transduce calcium Ca(2+) signaling in response to stimuli (e.g. UV or hexamethylene bisacetamide (HMBA)), and PPP1CA to dephosphorylate Thr-186. This released P-TEFb remains inactive in the pre-initiation complex with BRD4 until new Thr-186 phosphorylation occurs after the synthesis of a short RNA. Interacts with BRD4; to target chromatin binding. Interacts with JMJD6. Interacts with activated nuclear STAT3 and RELA/p65. Binds to AR and MYOD1. Forms a complex composed of CDK9, CCNT1/cyclin-T1, EP300 and GATA4 that stimulates hypertrophy in cardiomyocytes. The large PER complex involved in the repression of transcriptional termination is composed of at least PER2, CDK9, DDX5, DHX9, NCBP1 and POLR2A. Interacts with HSF1. Interacts with TBX21. Interacts with WDR43. Interacts with ZMYND8; the association appears to occur between homodimeric ZMYND8 and the activated form of the P-TEFb complex. Post-translationally, autophosphorylation at Thr-186, Ser-347, Thr-350, Ser-353, Thr-354 and Ser-357 triggers kinase activity by promoting cyclin and substrate binding upon conformational changes. Thr-186 phosphorylation requires the calcium Ca(2+) signaling pathway, including CaMK1D and calmodulin. This inhibition is relieved by Thr-29 dephosphorylation. Phosphorylation at Ser-175 inhibits kinase activity. Can be phosphorylated on either Thr-362 or Thr-363 but not on both simultaneously. In terms of processing, dephosphorylation of Thr-186 by PPM1A and PPM1B blocks CDK9 activity and may lead to CDK9 proteasomal degradation. However, PPP1CA-mediated Thr-186 dephosphorylation is required to release P-TEFb from its inactive P-TEFb/7SK snRNP complex. Dephosphorylated at Ser-347 by the PNUTS-PP1 complex during RNA polymerase II transcription pause-release. Dephosphorylation of C-terminus Thr and Ser residues by protein phosphatase-1 (PP1) triggers CDK9 activity. N6-acetylation of Lys-44 promotes kinase activity, whereas acetylation of both Lys-44 and Lys-48 mediated by PCAF/KAT2B and GCN5/KAT2A reduces kinase activity. The acetylated form associates with PML bodies in the nuclear matrix and with the transcriptionally silent HIV-1 genome; deacetylated upon transcription stimulation. Deacetylated by SIRT7, promoting the kinase activity and subsequent 'Ser-2' phosphorylation of the C-terminal domain (CTD) of RNA polymerase II. Post-translationally, polyubiquitinated and thus activated by UBR5. This ubiquitination is promoted by TFIIS/TCEA1 and favors 'Ser-2' phosphorylation of RPB1/POLR2A CTD.

It is found in the nucleus. The protein resides in the cytoplasm. It localises to the PML body. The enzyme catalyses L-seryl-[protein] + ATP = O-phospho-L-seryl-[protein] + ADP + H(+). It carries out the reaction L-threonyl-[protein] + ATP = O-phospho-L-threonyl-[protein] + ADP + H(+). The catalysed reaction is [DNA-directed RNA polymerase] + ATP = phospho-[DNA-directed RNA polymerase] + ADP + H(+). Its activity is regulated as follows. Activation by Thr-186 phosphorylation is calcium Ca(2+) signaling pathway-dependent; actively inactivated by dephosphorylation mediated by PPP1CA, PPM1A and PPM1B. Reversibly repressed by acetylation at Lys-44 and Lys-48. Protein kinase involved in the regulation of transcription. Member of the cyclin-dependent kinase pair (CDK9/cyclin-T) complex, also called positive transcription elongation factor b (P-TEFb), which facilitates the transition from abortive to productive elongation by phosphorylating the CTD (C-terminal domain) of the large subunit of RNA polymerase II (RNAP II) POLR2A, SUPT5H and RDBP. This complex is inactive when in the 7SK snRNP complex form. Phosphorylates EP300, MYOD1, RPB1/POLR2A and AR and the negative elongation factors DSIF and NELFE. Regulates cytokine inducible transcription networks by facilitating promoter recognition of target transcription factors (e.g. TNF-inducible RELA/p65 activation and IL-6-inducible STAT3 signaling). Promotes RNA synthesis in genetic programs for cell growth, differentiation and viral pathogenesis. P-TEFb is also involved in cotranscriptional histone modification, mRNA processing and mRNA export. Modulates a complex network of chromatin modifications including histone H2B monoubiquitination (H2Bub1), H3 lysine 4 trimethylation (H3K4me3) and H3K36me3; integrates phosphorylation during transcription with chromatin modifications to control co-transcriptional histone mRNA processing. The CDK9/cyclin-K complex has also a kinase activity towards CTD of RNAP II and can substitute for CDK9/cyclin-T P-TEFb in vitro. Replication stress response protein; the CDK9/cyclin-K complex is required for genome integrity maintenance, by promoting cell cycle recovery from replication arrest and limiting single-stranded DNA amount in response to replication stress, thus reducing the breakdown of stalled replication forks and avoiding DNA damage. In addition, probable function in DNA repair of isoform 2 via interaction with KU70/XRCC6. Promotes cardiac myocyte enlargement. RPB1/POLR2A phosphorylation on 'Ser-2' in CTD activates transcription. AR phosphorylation modulates AR transcription factor promoter selectivity and cell growth. DSIF and NELF phosphorylation promotes transcription by inhibiting their negative effect. The phosphorylation of MYOD1 enhances its transcriptional activity and thus promotes muscle differentiation. Catalyzes phosphorylation of KAT5, promoting KAT5 recruitment to chromatin and histone acetyltransferase activity. In Bos taurus (Bovine), this protein is Cyclin-dependent kinase 9 (CDK9).